A 195-amino-acid chain; its full sequence is uncharacterized protein (195 aa).

2 disordered regions span residues 1–51 (MTHN…GPSY) and 160–195 (SYSQQQEPQHYYKKHKHHSHHRPKHVKSSRSCKSCN). A compositionally biased stretch (polar residues) spans 13–28 (SYQNQAPQPQYYTRQP). Residues 170–189 (YYKKHKHHSHHRPKHVKSSR) show a composition bias toward basic residues.

This is an uncharacterized protein from Acanthamoeba polyphaga mimivirus (APMV).